The primary structure comprises 79 residues: Cyclin-dependent kinases regulatory subunit 1 (79 aa).

Position 2 is an N-acetylserine (S2).

The protein belongs to the CKS family. As to quaternary structure, forms a homohexamer that can probably bind six kinase subunits.

In terms of biological role, binds to the catalytic subunit of the cyclin dependent kinases and is essential for their biological function. This chain is Cyclin-dependent kinases regulatory subunit 1 (CKS1B), found in Bos taurus (Bovine).